The sequence spans 211 residues: Succinate dehydrogenase subunit 4, mitochondrial (211 aa).

Residues 1 to 36 constitute a mitochondrion transit peptide; that stretch reads MASRLLARSKALALALSRADAAAPGPAAGVQWLRTL. The disordered stretch occupies residues 41-64; the sequence is RDPAAAASPAPAPRQPAVGSPLGL. A heme-binding site is contributed by histidine 166. A ubiquinone is bound at residue tyrosine 179. The helical transmembrane segment at 188 to 210 threads the bilayer; sequence WVFIYFKILLIIMAKETVVYFDL.

In terms of assembly, component of complex II composed of eight subunits in plants: four classical SDH subunits SDH1, SDH2, SDH3 and SDH4 (a flavoprotein (FP), an iron-sulfur protein (IP), and a cytochrome b composed of a large and a small subunit.), as well as four subunits unknown in mitochondria from bacteria and heterotrophic eukaryotes. It depends on heme as a cofactor.

The protein localises to the mitochondrion inner membrane. It participates in carbohydrate metabolism; tricarboxylic acid cycle. In terms of biological role, membrane-anchoring subunit of succinate dehydrogenase (SDH). This Oryza sativa subsp. japonica (Rice) protein is Succinate dehydrogenase subunit 4, mitochondrial.